Consider the following 211-residue polypeptide: Probable nicotinate-nucleotide adenylyltransferase (211 aa).

It belongs to the NadD family.

It carries out the reaction nicotinate beta-D-ribonucleotide + ATP + H(+) = deamido-NAD(+) + diphosphate. It participates in cofactor biosynthesis; NAD(+) biosynthesis; deamido-NAD(+) from nicotinate D-ribonucleotide: step 1/1. Functionally, catalyzes the reversible adenylation of nicotinate mononucleotide (NaMN) to nicotinic acid adenine dinucleotide (NaAD). This is Probable nicotinate-nucleotide adenylyltransferase from Wigglesworthia glossinidia brevipalpis.